The following is a 35-amino-acid chain: Sorbin and SH3 domain-containing protein 1 (35 aa).

A SoHo domain is found at 1–8 (LNRDDDSD). Phosphoserine is present on S15. The region spanning 22–35 (CDDGWFVGTSRRTK) is the SH3 domain.

As to quaternary structure, interacts with the long isoform of AFDN and with VCL. AFDN and VCL bind to SORBS1 in a competitive manner and do not form a ternary complex. Interacts with ABL1, CBL, CBLB and INPPL1/SHIP2 through the third SH3 domain. Interaction with ABL1 occurs only after insulin stimulation while this has no effect on the interaction with INPPL1. Interacts with the insulin receptor but dissociates from it following insulin stimulation. Also interacts with SCA7, PTK2/FAK1 and flotillin. Interacts (via SH3 domain 2) with PXN. Interacts (via third SH3 domain) with the Ten-1 ICD form of TENM1; the interaction induces the translocation of SORBS1 to the nucleus. In terms of processing, O-glycosylated.

The protein resides in the cell junction. It localises to the adherens junction. It is found in the cell membrane. The protein localises to the cytoplasm. Its subcellular location is the cytoskeleton. The protein resides in the focal adhesion. It localises to the nucleus. It is found in the nucleus matrix. Plays a role in tyrosine phosphorylation of CBL by linking CBL to the insulin receptor. Required for insulin-stimulated glucose transport. Involved in formation of actin stress fibers and focal adhesions. This Rattus norvegicus (Rat) protein is Sorbin and SH3 domain-containing protein 1.